The following is a 552-amino-acid chain: Cleavage and polyadenylation specificity factor subunit 6 (552 aa).

Positions 1-213 are necessary for interaction with NXF1; sequence MADGVDHIDI…RGRFPGAVPG (213 aa). Residues 81 to 161 enclose the RRM domain; that stretch reads IALYIGNLTR…QNPVVTPCNK (81 aa). Residues 81–161 form a necessary for interaction with NUDT21/CPSF5 region; it reads IALYIGNLTR…QNPVVTPCNK (81 aa). The tract at residues 81–161 is necessary for nuclear paraspeckles localization; sequence IALYIGNLTR…QNPVVTPCNK (81 aa). A Phosphothreonine modification is found at Thr157. A compositionally biased stretch (polar residues) spans 169–180; it reads MQSRKTTQSGQM. Disordered regions lie at residues 169 to 411 and 479 to 552; these read MQSR…PLSE and GIES…YRHR. The GAR signature appears at 202 to 206; sequence RGRGR. Residues 207 to 219 show a composition bias toward low complexity; the sequence is FPGAVPGGDRFPG. Pro residues-rich tracts occupy residues 220-265, 285-366, and 377-388; these read PTGP…PLAG, GQPP…PPPT, and GPPPTDPYGRPP. Residues 389–404 show a composition bias toward basic and acidic residues; sequence PYDRGDYGPPGREMDT. Residues Thr404 and Thr407 each carry the phosphothreonine modification. The interval 404–552 is sufficient for nuclear speckle localization; the sequence is TARTPLSEAE…RDREREYRHR (149 aa). Residues 405–552 form a necessary for RNA-binding region; that stretch reads ARTPLSEAEF…RDREREYRHR (148 aa). The tract at residues 481–552 is necessary for interaction with SRSF3, SRSF7 and TRA2B/SFRS10; the sequence is ESKSYGSGSR…RDREREYRHR (72 aa). The arg/Ser-rich domain stretch occupies residues 491 to 552; the sequence is RRERSRERDH…RDREREYRHR (62 aa). Over residues 494 to 504 the composition is skewed to basic and acidic residues; the sequence is RSRERDHSRSR. Phosphoserine occurs at positions 495, 501, 512, 514, and 526. Residues 505–515 are compositionally biased toward basic residues; the sequence is EKSRRHKSRSR. A sufficient for nuclear targeting region spans residues 511 to 552; the sequence is KSRSRDRHDDYYRERSRERERHRDRDRDRDRERDREREYRHR. Over residues 516 to 552 the composition is skewed to basic and acidic residues; the sequence is DRHDDYYRERSRERERHRDRDRDRDRERDREREYRHR.

Belongs to the RRM CPSF6/7 family. As to quaternary structure, component of the cleavage factor Im (CFIm) complex which is a heterotetramer composed of two subunits of NUDT21/CPSF5 and two subunits of CPSF6 or CPSF7 or a heterodimer of CPSF6 and CPSF7. The cleavage factor Im (CFIm) complex associates with the CPSF and CSTF complexes to promote the assembly of the core mRNA 3'-processing machinery. Associates with the exon junction complex (EJC). Associates with the 80S ribosome particle. Interacts (via the RRM domain) with NUDT21/CPSF5; this interaction is direct and enhances binding to RNA. Interacts (via Arg/Ser-rich domain) with FIP1L1 (preferentially via unphosphorylated form and Arg/Glu/Asp-rich domain); this interaction mediates, at least in part, the interaction between the CFIm and CPSF complexes and may be inhibited by CPSF6 hyper-phosphorylation. Interacts (via N-terminus) with NXF1; this interaction is direct. Interacts with SRSF3. Interacts with SRSF7. Interacts with SNRNP70. Interacts with TRA2B/SFRS10. Interacts with UPF1. Interacts with UPF3B. Interacts with VIRMA. Interacts (via Arg/Ser-rich domain) with TNPO3; promoting nuclear import of CPSF6 independently of its phosphorylation status. Interacts with YTHDC1. Post-translationally, phosphorylated. Phosphorylated in the Arg/Ser-rich domain by SRPK1, in vitro. Symmetrically dimethylated on arginine residues in the GAR motif by PRMT5 in a WDR77- and CLNS1A-dependent manner. Asymmetrically dimethylated on arginine residues in the GAR motif by PRMT1.

Its subcellular location is the nucleus. It is found in the nucleoplasm. It localises to the nucleus speckle. The protein resides in the cytoplasm. In terms of biological role, component of the cleavage factor Im (CFIm) complex that functions as an activator of the pre-mRNA 3'-end cleavage and polyadenylation processing required for the maturation of pre-mRNA into functional mRNAs. CFIm contributes to the recruitment of multiprotein complexes on specific sequences on the pre-mRNA 3'-end, so called cleavage and polyadenylation signals (pA signals). Most pre-mRNAs contain multiple pA signals, resulting in alternative cleavage and polyadenylation (APA) producing mRNAs with variable 3'-end formation. The CFIm complex acts as a key regulator of cleavage and polyadenylation site choice during APA through its binding to 5'-UGUA-3' elements localized in the 3'-untranslated region (UTR) for a huge number of pre-mRNAs. CPSF6 enhances NUDT21/CPSF5 binding to 5'-UGUA-3' elements localized upstream of pA signals and promotes RNA looping, and hence activates directly the mRNA 3'-processing machinery. Plays a role in mRNA export. In Pongo abelii (Sumatran orangutan), this protein is Cleavage and polyadenylation specificity factor subunit 6.